The sequence spans 340 residues: Methionine import ATP-binding protein MetN 2 (340 aa).

One can recognise an ABC transporter domain in the interval 5–244; that stretch reads VRFESVTKTF…PQAPASKSFV (240 aa). 41-48 contacts ATP; that stretch reads GYSGAGKS.

Belongs to the ABC transporter superfamily. Methionine importer (TC 3.A.1.24) family. As to quaternary structure, the complex is composed of two ATP-binding proteins (MetN), two transmembrane proteins (MetI) and a solute-binding protein (MetQ).

It is found in the cell membrane. The enzyme catalyses L-methionine(out) + ATP + H2O = L-methionine(in) + ADP + phosphate + H(+). The catalysed reaction is D-methionine(out) + ATP + H2O = D-methionine(in) + ADP + phosphate + H(+). In terms of biological role, part of the ABC transporter complex MetNIQ involved in methionine import. Responsible for energy coupling to the transport system. This chain is Methionine import ATP-binding protein MetN 2, found in Rhodococcus jostii (strain RHA1).